A 160-amino-acid chain; its full sequence is Inner membrane protein YcdZ (160 aa).

Helical transmembrane passes span 20 to 42 (WGAV…YFAC), 50 to 70 (LLIS…IIHG), 72 to 92 (ALAP…AFLM), 99 to 119 (LLLS…AGQG), and 123 to 143 (LVLP…NSGL).

This sequence to E.coli YahC.

It is found in the cell inner membrane. The chain is Inner membrane protein YcdZ (ycdZ) from Salmonella typhimurium (strain LT2 / SGSC1412 / ATCC 700720).